The chain runs to 855 residues: Envelope glycoprotein gp150 (855 aa).

The Extracellular segment spans residues 1-784 (MAEGFAVNRQ…WLGNIPRYLK (784 aa)). Residues Asn-220, Asn-258, Asn-269, Asn-274, Asn-298, Asn-330, Asn-336, Asn-342, Asn-418, Asn-422, Asn-448, Asn-469, Asn-481, Asn-499, Asn-518, Asn-531, and Asn-548 are each glycosylated (N-linked (GlcNAc...) asparagine; by host). Positions 615–635 (VMLALATVLSMAGAGTGATAI) are fusion peptide. Residues 642–692 (HQVLATHQETIEKITEALKVNNLRLVTLEHQVLVIGLKVEAIEKFLYTAFA) adopt a coiled-coil conformation. An immunosuppression region spans residues 661 to 679 (VNNLRLVTLEHQVLVIGLK). Residues Asn-716, Asn-720, and Asn-736 are each glycosylated (N-linked (GlcNAc...) asparagine; by host). Residues 735–771 (YNQTKDLQQKFYEIIMDMEQNNVQGRKGLQQLQEWED) are a coiled coil. Residues 785–805 (GLLGGILGIGLGVLLLILCLP) traverse the membrane as a helical segment. The Cytoplasmic segment spans residues 806–855 (TLVDCIRNCISKVLGYTVIAMPEVEEEEIQPPMELRRNGRQCDMSEKEEE). The segment at 835–855 (QPPMELRRNGRQCDMSEKEEE) is disordered.

As to quaternary structure, the mature envelope protein (Env) consists of a trimer of SU-TM heterodimers attached by noncovalent interactions or by a labile interchain disulfide bond. Post-translationally, specific enzymatic cleavages in vivo yield mature proteins. Envelope glycoproteins are synthesized as an inactive precursor that is N-glycosylated and processed likely by host cell furin or by a furin-like protease in the Golgi to yield the mature SU and TM proteins. The cleavage site between SU and TM requires the minimal sequence [KR]-X-[KR]-R.

It localises to the virion membrane. The protein resides in the host cell membrane. In terms of biological role, the surface protein (SU) attaches the virus to the host cell by binding to its receptor. This interaction triggers the refolding of the transmembrane protein (TM) and is thought to activate its fusogenic potential by unmasking its fusion peptide. Fusion occurs at the host cell plasma membrane. The transmembrane protein (TM) acts as a class I viral fusion protein. Under the current model, the protein has at least 3 conformational states: pre-fusion native state, pre-hairpin intermediate state, and post-fusion hairpin state. During viral and target cell membrane fusion, the coiled coil regions (heptad repeats) assume a trimer-of-hairpins structure, positioning the fusion peptide in close proximity to the C-terminal region of the ectodomain. The formation of this structure appears to drive apposition and subsequent fusion of viral and target cell membranes. Membranes fusion leads to delivery of the nucleocapsid into the cytoplasm. In Feline immunodeficiency virus (strain UK2) (FIV), this protein is Envelope glycoprotein gp150 (env).